Reading from the N-terminus, the 644-residue chain is Protein cueball (644 aa).

The N-terminal stretch at 1–26 is a signal peptide; it reads MIRIRFGMDVLLVLLLATCLLTPAHG. The Extracellular portion of the chain corresponds to 27 to 531; the sequence is TPLEWDFAVT…VCLTPRVWTS (505 aa). 2 N-linked (GlcNAc...) asparagine glycosylation sites follow: Asn-82 and Asn-108. LDL-receptor class B repeat units follow at residues 121-166, 167-211, and 212-257; these read MNLF…DVCR, RKLY…DQLS, and DRLF…TNDA. Residues Asn-175 and Asn-190 are each glycosylated (N-linked (GlcNAc...) asparagine). A disordered region spans residues 280–301; that stretch reads TTTSKPEEEDSTDSTDFTDPEP. Residues 286 to 301 are compositionally biased toward acidic residues; the sequence is EEEDSTDSTDFTDPEP. An N-linked (GlcNAc...) asparagine glycan is attached at Asn-313. 2 consecutive EGF-like domains span residues 398-430 and 433-471; these read EIRE…FTGE and ELSV…ARCE. Disulfide bonds link Cys-402–Cys-411, Cys-406–Cys-421, Cys-437–Cys-447, Cys-441–Cys-459, and Cys-461–Cys-470. Asn-473 and Asn-508 each carry an N-linked (GlcNAc...) asparagine glycan. A helical transmembrane segment spans residues 532–552; that stretch reads SVIIILVVGIVSSLLLVAVIV. At 553–644 the chain is on the cytoplasmic side; that stretch reads HGIRRLYKPK…LIHNMEDDLY (92 aa).

Belongs to the cueball family.

It localises to the cell membrane. In terms of biological role, has a role in spermatogenesis and oogenesis. This is Protein cueball from Drosophila sechellia (Fruit fly).